Consider the following 304-residue polypeptide: Oxygen-dependent coproporphyrinogen-III oxidase (304 aa).

Ser-94 provides a ligand contact to substrate. His-98 and His-108 together coordinate a divalent metal cation. Residue His-108 is the Proton donor of the active site. 110–112 provides a ligand contact to substrate; sequence NVR. Residues His-147 and His-177 each contribute to the a divalent metal cation site. The segment at 242–277 is important for dimerization; that stretch reads YVEFNLVWDRGTLFGLQSGGRTESVLMSMPPLARWQ. 260-262 lines the substrate pocket; sequence GGR.

The protein belongs to the aerobic coproporphyrinogen-III oxidase family. As to quaternary structure, homodimer. Requires a divalent metal cation as cofactor.

It is found in the cytoplasm. The catalysed reaction is coproporphyrinogen III + O2 + 2 H(+) = protoporphyrinogen IX + 2 CO2 + 2 H2O. Its pathway is porphyrin-containing compound metabolism; protoporphyrin-IX biosynthesis; protoporphyrinogen-IX from coproporphyrinogen-III (O2 route): step 1/1. In terms of biological role, involved in the heme biosynthesis. Catalyzes the aerobic oxidative decarboxylation of propionate groups of rings A and B of coproporphyrinogen-III to yield the vinyl groups in protoporphyrinogen-IX. The protein is Oxygen-dependent coproporphyrinogen-III oxidase of Sodalis glossinidius (strain morsitans).